Reading from the N-terminus, the 428-residue chain is Dual-specificity RNA methyltransferase RlmN (428 aa).

Residues 1–17 are compositionally biased toward basic and acidic residues; it reads MPLHRVEALGEPQDRTG. The tract at residues 1–44 is disordered; the sequence is MPLHRVEALGEPQDRTGKTFSGRTNGPISSPLTDTERRMSIPQN. Residues 18–33 show a composition bias toward polar residues; the sequence is KTFSGRTNGPISSPLT. Glu-136 functions as the Proton acceptor in the catalytic mechanism. The region spanning 142–381 is the Radical SAM core domain; it reads EDDRGALCVS…APIRMPRGRD (240 aa). A disulfide bridge connects residues Cys-149 and Cys-386. [4Fe-4S] cluster contacts are provided by Cys-156, Cys-160, and Cys-163. Residues 212–213, Ser-244, 266–268, and Asn-343 contribute to the S-adenosyl-L-methionine site; these read GE and SLH. Residue Cys-386 is the S-methylcysteine intermediate of the active site.

The protein belongs to the radical SAM superfamily. RlmN family. It depends on [4Fe-4S] cluster as a cofactor.

It localises to the cytoplasm. It carries out the reaction adenosine(2503) in 23S rRNA + 2 reduced [2Fe-2S]-[ferredoxin] + 2 S-adenosyl-L-methionine = 2-methyladenosine(2503) in 23S rRNA + 5'-deoxyadenosine + L-methionine + 2 oxidized [2Fe-2S]-[ferredoxin] + S-adenosyl-L-homocysteine. The enzyme catalyses adenosine(37) in tRNA + 2 reduced [2Fe-2S]-[ferredoxin] + 2 S-adenosyl-L-methionine = 2-methyladenosine(37) in tRNA + 5'-deoxyadenosine + L-methionine + 2 oxidized [2Fe-2S]-[ferredoxin] + S-adenosyl-L-homocysteine. Its function is as follows. Specifically methylates position 2 of adenine 2503 in 23S rRNA and position 2 of adenine 37 in tRNAs. m2A2503 modification seems to play a crucial role in the proofreading step occurring at the peptidyl transferase center and thus would serve to optimize ribosomal fidelity. The chain is Dual-specificity RNA methyltransferase RlmN from Rhodospirillum rubrum (strain ATCC 11170 / ATH 1.1.1 / DSM 467 / LMG 4362 / NCIMB 8255 / S1).